The following is a 495-amino-acid chain: DDB1- and CUL4-associated factor 4 (495 aa).

Over residues 1-17 (MNKSRWQSRRRHGRRSH) the composition is skewed to basic residues. The tract at residues 1-66 (MNKSRWQSRR…TAGTSSVPEL (66 aa)) is disordered. The segment covering 24–34 (RLRDSEDRSDS) has biased composition (basic and acidic residues). The span at 51–62 (PSTSSGTAGTSS) shows a compositional bias: low complexity. WD repeat units follow at residues 368-407 (FHDSAVTSVRILQDEQYLMASDMAGKIKLWDLRTTKCVRQ) and 410-451 (GHVN…LLRT).

Interacts with DDB1 and CUL4A.

Its pathway is protein modification; protein ubiquitination. Its function is as follows. May function as a substrate receptor for CUL4-DDB1 E3 ubiquitin-protein ligase complex. The polypeptide is DDB1- and CUL4-associated factor 4 (DCAF4) (Homo sapiens (Human)).